We begin with the raw amino-acid sequence, 411 residues long: Methylthioribose-1-phosphate isomerase (411 aa).

Aspartate 284 serves as the catalytic Proton donor.

The protein belongs to the eIF-2B alpha/beta/delta subunits family. MtnA subfamily.

The protein localises to the cytoplasm. Its subcellular location is the nucleus. The catalysed reaction is 5-(methylsulfanyl)-alpha-D-ribose 1-phosphate = 5-(methylsulfanyl)-D-ribulose 1-phosphate. It participates in amino-acid biosynthesis; L-methionine biosynthesis via salvage pathway; L-methionine from S-methyl-5-thio-alpha-D-ribose 1-phosphate: step 1/6. Catalyzes the interconversion of methylthioribose-1-phosphate (MTR-1-P) into methylthioribulose-1-phosphate (MTRu-1-P). This is Methylthioribose-1-phosphate isomerase from Komagataella phaffii (strain GS115 / ATCC 20864) (Yeast).